The chain runs to 337 residues: Autophagy protein 5 (337 aa).

A Glycyl lysine isopeptide (Lys-Gly) (interchain with G-Cter in ATG12) cross-link involves residue Lys128. The disordered stretch occupies residues 271–290; it reads RAQTSGEERSIDDTEEADGS. The segment covering 276 to 290 has biased composition (basic and acidic residues); the sequence is GEERSIDDTEEADGS.

This sequence belongs to the ATG5 family. As to quaternary structure, conjugated to ATG12. Conjugated to ATG12; which is essential for autophagy. Conjugation with ATG12 involves ATG7 as an E1-like activating enzyme and ATG10 as an E2-like conjugating enzyme. In terms of tissue distribution, ubiquitous.

Its subcellular location is the cytoplasm. Functionally, required for autophagy. Conjugation to ATG12 is essential for plant nutrient recycling. Involved in a negative feedback loop that modulates NPR1-dependent salicylic acid (SA) signaling and limits senescence and immunity-related programmed cell death (PCD) in plants. Involved in complete proteolysis of chloroplast stroma proteins in senescent leaves. Involved in the degradation of damaged peroxisomes. The chain is Autophagy protein 5 from Arabidopsis thaliana (Mouse-ear cress).